Consider the following 737-residue polypeptide: DNA polymerase iota (737 aa).

The region spanning 17 to 231 (IIHLDMDYFY…GDLKRVTGIG (215 aa)) is the UmuC domain. Asp21 lines the Mg(2+) pocket. A 2'-deoxyribonucleoside 5'-triphosphate is bound by residues Tyr26 and Arg58. Mg(2+) is bound at residue Asp113. Glu114 is a catalytic residue. 2 DNA-binding regions span residues 212–277 (TYAE…FGRD) and 288–413 (KTIG…SKFQ). Disordered regions lie at residues 443–464 (TSLT…RSSP), 482–515 (SPVP…SPKK), 557–581 (DSEK…RFRT), and 607–643 (LSSN…PSPT). The segment covering 491 to 502 (GSESAATNSDFS) has biased composition (polar residues). 3 stretches are compositionally biased toward low complexity: residues 563 to 577 (PMST…APAP), 607 to 618 (LSSNASSTASSP), and 632 to 643 (PSTTTLPFPSPT). Residues 669–686 (VDAEVFKELPVELQTELI) carry the Ubiquitin-binding (UBM) motif.

The protein belongs to the DNA polymerase type-Y family. Mg(2+) is required as a cofactor. It depends on Mn(2+) as a cofactor.

Its subcellular location is the nucleus. The enzyme catalyses DNA(n) + a 2'-deoxyribonucleoside 5'-triphosphate = DNA(n+1) + diphosphate. Functionally, error-prone DNA polymerase specifically involved in DNA repair. Plays an important role in translesion synthesis, where the normal high-fidelity DNA polymerases cannot proceed and DNA synthesis stalls. Favors Hoogsteen base-pairing in the active site. Inserts the correct base with higher fidelity opposite an adenosine template. Exhibits low fidelity and efficiency opposite a thymidine template, where it will preferentially insert guanosine. Forms a Schiff base with 5'-deoxyribose phosphate at abasic sites, but may not have lyase activity. The chain is DNA polymerase iota from Drosophila melanogaster (Fruit fly).